The chain runs to 445 residues: Flagellum-associated coiled-coil domain-containing protein 1 (445 aa).

A disordered region spans residues 26–47; that stretch reads PQLPRKNSTGSSKLTPLVPAPK. Over residues 30 to 39 the composition is skewed to polar residues; that stretch reads RKNSTGSSKL. Coiled-coil stretches lie at residues 122 to 226 and 283 to 315; these read SRTN…TYQD and AVFENFIQEKEELLKQHQSDTLQLEELRKTKEV. Lys376 carries the post-translational modification N6-acetyllysine. The stretch at 387 to 414 forms a coiled coil; that stretch reads EKYKHTIQILTEENIHLKQKIISKNEEI.

It localises to the cytoplasm. The protein localises to the cytoplasmic granule. Its subcellular location is the cell projection. The protein resides in the cilium. It is found in the flagellum. The polypeptide is Flagellum-associated coiled-coil domain-containing protein 1 (Homo sapiens (Human)).